The chain runs to 172 residues: Adenine phosphoribosyltransferase (172 aa).

The protein belongs to the purine/pyrimidine phosphoribosyltransferase family. In terms of assembly, homodimer.

The protein localises to the cytoplasm. It catalyses the reaction AMP + diphosphate = 5-phospho-alpha-D-ribose 1-diphosphate + adenine. The protein operates within purine metabolism; AMP biosynthesis via salvage pathway; AMP from adenine: step 1/1. Functionally, catalyzes a salvage reaction resulting in the formation of AMP, that is energically less costly than de novo synthesis. The chain is Adenine phosphoribosyltransferase from Clostridium tetani (strain Massachusetts / E88).